A 274-amino-acid polypeptide reads, in one-letter code: Nitrogenase iron protein (274 aa).

8–15 (GKGGIGKS) is an ATP binding site. Cys-94 contacts [4Fe-4S] cluster. The residue at position 97 (Arg-97) is an ADP-ribosylarginine; by dinitrogenase reductase ADP-ribosyltransferase. Position 131 (Cys-131) interacts with [4Fe-4S] cluster.

Belongs to the NifH/BchL/ChlL family. In terms of assembly, homodimer. Requires [4Fe-4S] cluster as cofactor. In terms of processing, the reversible ADP-ribosylation of Arg-97 inactivates the nitrogenase reductase and regulates nitrogenase activity.

It catalyses the reaction N2 + 8 reduced [2Fe-2S]-[ferredoxin] + 16 ATP + 16 H2O = H2 + 8 oxidized [2Fe-2S]-[ferredoxin] + 2 NH4(+) + 16 ADP + 16 phosphate + 6 H(+). The key enzymatic reactions in nitrogen fixation are catalyzed by the nitrogenase complex, which has 2 components: the iron protein and the molybdenum-iron protein. This is Nitrogenase iron protein from Chlorobaculum parvum (strain DSM 263 / NCIMB 8327) (Chlorobium vibrioforme subsp. thiosulfatophilum).